Here is a 525-residue protein sequence, read N- to C-terminus: Ankyrin repeat domain-containing protein SOWAHC (525 aa).

The segment at 84-263 is disordered; it reads CEGPSEPSGD…EESSGGGSVT (180 aa). Phosphoserine is present on S88. Low complexity predominate over residues 101 to 112; that stretch reads AEPEAPDGPAGP. 3 positions are modified to phosphoserine: S126, S213, and S226. The segment covering 230–241 has biased composition (gly residues); it reads SSGGGRGRGGGD. A compositionally biased stretch (low complexity) spans 242 to 251; it reads SDSASVASSS. 2 ANK repeats span residues 301-330 and 340-370; these read TGFT…KHQL and GGYT…DVDI. The tract at residues 434-525 is disordered; sequence DGGDHHHHHH…TLRPKSNVFG (92 aa). A compositionally biased stretch (basic residues) spans 468 to 477; sequence IKPRLNKIRF. Residues 489-509 are compositionally biased toward basic and acidic residues; sequence RDPEQPLEGRGEEGVGEERPV.

It belongs to the SOWAH family.

The protein is Ankyrin repeat domain-containing protein SOWAHC (SOWAHC) of Homo sapiens (Human).